Consider the following 377-residue polypeptide: Hydrogenase maturation factor HypD (377 aa).

3 residues coordinate Fe cation: Cys-41, Cys-69, and Cys-72.

The protein belongs to the HypD family. [4Fe-4S] cluster is required as a cofactor.

It functions in the pathway protein modification; [NiFe] hydrogenase maturation. In terms of biological role, involved in the maturation of [NiFe] hydrogenases. Involved in the biosynthesis of the Fe(CN)(2)CO cofactor. The sequence is that of Hydrogenase maturation factor HypD from Rhodobacter capsulatus (Rhodopseudomonas capsulata).